The chain runs to 362 residues: Dihydroorotate dehydrogenase (quinone) (362 aa).

FMN contacts are provided by residues 62–66 and Thr86; that span reads AGYDK. Substrate is bound at residue Lys66. 111–115 is a binding site for substrate; that stretch reads NRLGF. Residues Asn139 and Asn170 each contribute to the FMN site. Asn170 is a substrate binding site. Ser173 serves as the catalytic Nucleophile. Asn175 is a substrate binding site. Positions 215 and 243 each coordinate FMN. Position 244-245 (244-245) interacts with substrate; it reads NT. Residues Gly266, Gly295, and 316–317 each bind FMN; that span reads YS.

Belongs to the dihydroorotate dehydrogenase family. Type 2 subfamily. Monomer. FMN is required as a cofactor.

The protein localises to the cell membrane. The catalysed reaction is (S)-dihydroorotate + a quinone = orotate + a quinol. It functions in the pathway pyrimidine metabolism; UMP biosynthesis via de novo pathway; orotate from (S)-dihydroorotate (quinone route): step 1/1. In terms of biological role, catalyzes the conversion of dihydroorotate to orotate with quinone as electron acceptor. This Rhizobium leguminosarum bv. trifolii (strain WSM2304) protein is Dihydroorotate dehydrogenase (quinone).